A 200-amino-acid chain; its full sequence is Large ribosomal subunit protein uL4c (200 aa).

Residues 45 to 71 are disordered; that stretch reads RAEIRGGGRKPWKQKGTGRARAGSRRS. Positions 51-68 are enriched in basic residues; the sequence is GGRKPWKQKGTGRARAGS.

This sequence belongs to the universal ribosomal protein uL4 family. In terms of assembly, part of the 50S ribosomal subunit.

The protein resides in the plastid. The protein localises to the chloroplast. Functionally, probably binds the 23S rRNA. This Cyanidioschyzon merolae (strain NIES-3377 / 10D) (Unicellular red alga) protein is Large ribosomal subunit protein uL4c (rpl4).